Here is a 78-residue protein sequence, read N- to C-terminus: Large ribosomal subunit protein bL28 (78 aa).

A disordered region spans residues 1-26 (MARVCQVTGKRPMSGHNVSHANNKTK).

Belongs to the bacterial ribosomal protein bL28 family.

The protein is Large ribosomal subunit protein bL28 of Nitrosomonas europaea (strain ATCC 19718 / CIP 103999 / KCTC 2705 / NBRC 14298).